Here is a 215-residue protein sequence, read N- to C-terminus: MDSEKTGEAKITIQEPKAADPKGKGIADAPPPPVVVTTAKAIQKLPRGGWKKGVAIFDFVVRLCAIATGLAATGIMGTTEQTLPFFTQFFQFHAEYNDLPTFMFFVFANGIASGYLILSLPFSIVCIVRPLAIVPRLLLIIFDTVVMALTIAAASAAAAIVYLAHNGNSNANWNAICQQFNDFCQQTSTAVVASFITAAMLTFLIVLSAFALKRN.

The segment at 1–26 is disordered; the sequence is MDSEKTGEAKITIQEPKAADPKGKGI. The Cytoplasmic portion of the chain corresponds to 1–55; it reads MDSEKTGEAKITIQEPKAADPKGKGIADAPPPPVVVTTAKAIQKLPRGGWKKGVA. The chain crosses the membrane as a helical span at residues 56-76; the sequence is IFDFVVRLCAIATGLAATGIM. Residues 77 to 101 lie on the Extracellular side of the membrane; sequence GTTEQTLPFFTQFFQFHAEYNDLPT. A helical transmembrane segment spans residues 102–122; the sequence is FMFFVFANGIASGYLILSLPF. The Cytoplasmic segment spans residues 123-136; it reads SIVCIVRPLAIVPR. A helical transmembrane segment spans residues 137–157; sequence LLLIIFDTVVMALTIAAASAA. The Extracellular segment spans residues 158–189; the sequence is AAIVYLAHNGNSNANWNAICQQFNDFCQQTST. A helical transmembrane segment spans residues 190 to 210; sequence AVVASFITAAMLTFLIVLSAF. Topologically, residues 211 to 215 are cytoplasmic; that stretch reads ALKRN.

This sequence belongs to the Casparian strip membrane proteins (CASP) family. As to quaternary structure, homodimer and heterodimers.

The protein resides in the cell membrane. In terms of biological role, regulates membrane-cell wall junctions and localized cell wall deposition. Required for establishment of the Casparian strip membrane domain (CSD) and the subsequent formation of Casparian strips, a cell wall modification of the root endodermis that determines an apoplastic barrier between the intraorganismal apoplasm and the extraorganismal apoplasm and prevents lateral diffusion. This is Casparian strip membrane protein 3 from Ricinus communis (Castor bean).